We begin with the raw amino-acid sequence, 1401 residues long: DNA-directed RNA polymerase subunit beta' (1401 aa).

Zn(2+) is bound by residues Cys70, Cys72, Cys85, and Cys88. Mg(2+)-binding residues include Asp460, Asp462, and Asp464. Cys808, Cys882, Cys889, and Cys892 together coordinate Zn(2+).

Belongs to the RNA polymerase beta' chain family. In terms of assembly, the RNAP catalytic core consists of 2 alpha, 1 beta, 1 beta' and 1 omega subunit. When a sigma factor is associated with the core the holoenzyme is formed, which can initiate transcription. The cofactor is Mg(2+). Zn(2+) serves as cofactor.

The catalysed reaction is RNA(n) + a ribonucleoside 5'-triphosphate = RNA(n+1) + diphosphate. Functionally, DNA-dependent RNA polymerase catalyzes the transcription of DNA into RNA using the four ribonucleoside triphosphates as substrates. The chain is DNA-directed RNA polymerase subunit beta' from Legionella pneumophila (strain Corby).